The following is a 458-amino-acid chain: MMSSRTDTDGSSIRFSDHTLDKATKAKVTLENYYSNLVTQYGERKQRLAKLEAQLKDESLTESQRQEKRLQHAQKETEYLRLKRLRLGVEDFEALKVIGRGAFGEVRLVQKKDTGHVYAMKVLRKADMLEKEQVAHVRAERDVLVEADHQWVVKMYYSFQDQVNLYLIMEFLPGGDMMTLLMKKDTLSEEGTQFYISETALAIDSIHKLGFIHRDIKPDNLLLDARGHLKLSDFGLCTGLKKSHRTDFYRDLSQAKPSDFIGTCASPMDSKRRAESWKRNRRALAYSTVGTPDYIAPEVFLQTGYGPACDWWSLGVIMYEMLMGYPPFCSDNPQDTYRKVMNWRETLIFPPEIPISEEAKETIIKFCCEADRRLGSQRGLEDLKSVPFFRGVDWEHIRERPAAIPVEVRSIDDTSNFDEFPDVSLEIPSAPIPQGGEIAKDWVFINYTYKRFEVRNLE.

A Protein kinase domain is found at 92 to 389; sequence FEALKVIGRG…LEDLKSVPFF (298 aa). Residues 98-106 and K121 contribute to the ATP site; that span reads IGRGAFGEV. Residues 118-179 are interaction with mats and Mob1; it reads YAMKVLRKAD…EFLPGGDMMT (62 aa). The active-site Proton acceptor is the D215. S287 is modified (phosphoserine). The AGC-kinase C-terminal domain occupies 390 to 458; the sequence is RGVDWEHIRE…YKRFEVRNLE (69 aa). Phosphothreonine is present on T448.

The protein belongs to the protein kinase superfamily. AGC Ser/Thr protein kinase family. As to quaternary structure, interacts with, and is activated by, Mob1. It depends on Mg(2+) as a cofactor.

The protein localises to the cytoplasm. It localises to the nucleus. It catalyses the reaction L-seryl-[protein] + ATP = O-phospho-L-seryl-[protein] + ADP + H(+). The enzyme catalyses L-threonyl-[protein] + ATP = O-phospho-L-threonyl-[protein] + ADP + H(+). In terms of biological role, serine/threonine-protein kinase involved in controlling cell structure and proliferation of a variety of polarized outgrowths including epidermal hairs, bristles, arista laterals, and dendrites. Together with fry, maintains the integrity of epidermal hairs and is an essential component of the signaling pathway regulating dendritic branching of sensory neurons. Reduces neurite outgrowth by phosphorylating pav/pavarotti, thereby inhibiting its function in microtubule-microtubule sliding. This chain is Serine/threonine-protein kinase tricornered, found in Drosophila pseudoobscura pseudoobscura (Fruit fly).